A 274-amino-acid chain; its full sequence is Putative deoxyribonuclease TATDN1 homolog (274 aa).

4 residues coordinate a divalent metal cation: Glu105, His139, His162, and Asp208.

This sequence belongs to the metallo-dependent hydrolases superfamily. TatD-type hydrolase family. A divalent metal cation serves as cofactor.

It is found in the nucleus. Functionally, putative deoxyribonuclease. This chain is Putative deoxyribonuclease TATDN1 homolog, found in Enterocytozoon bieneusi (strain H348) (Microsporidian parasite).